The primary structure comprises 266 residues: Gasdermin bGSDM (266 aa).

C6 carries the S-palmitoyl cysteine lipid modification. 4 beta stranded membrane-spanning segments follow: residues 70–86, 99–117, 163–180, and 189–205; these read ISHS…AGNF, APKL…FSFS, AIDM…DVQA, and LGGK…TISF. Positions 245 to 266 are C-terminal region; that stretch reads GAAEPYLLRRGQVLIVEDMQAT.

It belongs to the bacterial gasdermin family. As to quaternary structure, monomer. Forms large, homooligomeric ring-shaped pores when inserted in membranes. Cleavage by the adjacently encoded protease (probably ISF6_0256) predicted to occur between Glu-244 and Gly-245 relieves autoinhibition, releasing the N-terminus which initiates loss of cell integrity. Post-translationally, palmitoylation helps stabilize the inactive state; may self palmitoylate. Palmitoylation plays a significant role in pore formation.

The protein resides in the cytoplasm. It localises to the cell inner membrane. Its activity is regulated as follows. The full-length protein before cleavage is inactive: intramolecular interactions between the N-terminal domain and the C-terminal region as well as the lipid modification, mediate autoinhibition. The pyroptosis-like-inducing activity is carried by the released N-terminal domain (Gasdermin bGSDM, N-terminus). Functionally, precursor of a pore-forming protein involved in defense against bacteriophages. Cleavage of this precursor by its dedicated, neighboring protease (probably ISF6_0256) releases the active moiety (gasdermin bGSDM, N-terminus) which inserts into membranes, forming pores and triggering cell death. Its function is as follows. Pore-forming protein that causes membrane permeabilization via a pyroptosis-like activity. Makes ring-like pores with an interior pore diameter of 300-400 Angstroms, when integrated in liposomes. The polypeptide is Gasdermin bGSDM (Piscinibacter sakaiensis (Ideonella sakaiensis)).